Consider the following 122-residue polypeptide: Methylglyoxal synthase (122 aa).

In terms of domain architecture, MGS-like spans 1 to 122 (MRIALIAHDK…DLFIKHLKGK (122 aa)). Substrate-binding positions include histidine 8, lysine 12, 34-37 (TGTT), and 54-55 (SG). The Proton donor/acceptor role is filled by aspartate 60. Histidine 87 contributes to the substrate binding site.

This sequence belongs to the methylglyoxal synthase family.

It catalyses the reaction dihydroxyacetone phosphate = methylglyoxal + phosphate. Catalyzes the formation of methylglyoxal from dihydroxyacetone phosphate. The sequence is that of Methylglyoxal synthase from Acholeplasma laidlawii (strain PG-8A).